A 151-amino-acid polypeptide reads, in one-letter code: Ubiquitin-conjugating enzyme E2 W (151 aa).

The UBC core domain maps to 3–151 (SMQKRLQKEL…TKWWYHDDTC (149 aa)). Catalysis depends on Cys91, which acts as the Glycyl thioester intermediate.

It belongs to the ubiquitin-conjugating enzyme family.

Its subcellular location is the nucleus. The enzyme catalyses S-ubiquitinyl-[E1 ubiquitin-activating enzyme]-L-cysteine + [E2 ubiquitin-conjugating enzyme]-L-cysteine = [E1 ubiquitin-activating enzyme]-L-cysteine + S-ubiquitinyl-[E2 ubiquitin-conjugating enzyme]-L-cysteine.. It carries out the reaction S-ubiquitinyl-[E1 ubiquitin-activating enzyme]-L-cysteine + [acceptor protein]-N-terminal-amino acid = [E1 ubiquitin-activating enzyme]-L-cysteine + N-terminal-ubiquitinyl-[acceptor protein].. It participates in protein modification; protein ubiquitination. Its function is as follows. Accepts ubiquitin from the E1 complex and catalyzes its covalent attachment to other proteins. Catalyzes monoubiquitination. Involved in degradation of misfolded chaperone substrate and DNA repair. This Xenopus tropicalis (Western clawed frog) protein is Ubiquitin-conjugating enzyme E2 W (ube2w).